Reading from the N-terminus, the 399-residue chain is Phosphopentomutase (399 aa).

Residues Asp-10, Asp-296, His-301, Asp-337, His-338, and His-349 each contribute to the Mn(2+) site.

This sequence belongs to the phosphopentomutase family. Requires Mn(2+) as cofactor.

Its subcellular location is the cytoplasm. The enzyme catalyses 2-deoxy-alpha-D-ribose 1-phosphate = 2-deoxy-D-ribose 5-phosphate. It catalyses the reaction alpha-D-ribose 1-phosphate = D-ribose 5-phosphate. Its pathway is carbohydrate degradation; 2-deoxy-D-ribose 1-phosphate degradation; D-glyceraldehyde 3-phosphate and acetaldehyde from 2-deoxy-alpha-D-ribose 1-phosphate: step 1/2. Functionally, isomerase that catalyzes the conversion of deoxy-ribose 1-phosphate (dRib-1-P) and ribose 1-phosphate (Rib-1-P) to deoxy-ribose 5-phosphate (dRib-5-P) and ribose 5-phosphate (Rib-5-P), respectively. The protein is Phosphopentomutase of Idiomarina loihiensis (strain ATCC BAA-735 / DSM 15497 / L2-TR).